The primary structure comprises 390 residues: GTPase Obg (390 aa).

An Obg domain is found at 1–159 (MKFVDEASIL…RELLLELMLL (159 aa)). Residues 127–147 (NTRFKSSVNRTPRQKTNGTPG) are disordered. Polar residues predominate over residues 129–145 (RFKSSVNRTPRQKTNGT). Residues 160-333 (ADVGMLGMPN…LCWDVMTFII (174 aa)) form the OBG-type G domain. Residues 166 to 173 (GMPNAGKS), 191 to 195 (FTTLV), 213 to 216 (DIPG), 283 to 286 (NKID), and 314 to 316 (SAA) contribute to the GTP site. Positions 173 and 193 each coordinate Mg(2+).

It belongs to the TRAFAC class OBG-HflX-like GTPase superfamily. OBG GTPase family. As to quaternary structure, monomer. The cofactor is Mg(2+).

It localises to the cytoplasm. An essential GTPase which binds GTP, GDP and possibly (p)ppGpp with moderate affinity, with high nucleotide exchange rates and a fairly low GTP hydrolysis rate. Plays a role in control of the cell cycle, stress response, ribosome biogenesis and in those bacteria that undergo differentiation, in morphogenesis control. The sequence is that of GTPase Obg from Escherichia fergusonii (strain ATCC 35469 / DSM 13698 / CCUG 18766 / IAM 14443 / JCM 21226 / LMG 7866 / NBRC 102419 / NCTC 12128 / CDC 0568-73).